The following is a 491-amino-acid chain: Protein nucleotidyltransferase YdiU (491 aa).

ATP is bound by residues Gly94, Gly96, Arg97, Lys117, Asp129, Gly130, Arg180, and Arg187. The active-site Proton acceptor is Asp256. Residues Asn257 and Asp266 each contribute to the Mg(2+) site. Asp266 serves as a coordination point for ATP.

The protein belongs to the SELO family. Mg(2+) serves as cofactor. Requires Mn(2+) as cofactor.

The enzyme catalyses L-seryl-[protein] + ATP = 3-O-(5'-adenylyl)-L-seryl-[protein] + diphosphate. It carries out the reaction L-threonyl-[protein] + ATP = 3-O-(5'-adenylyl)-L-threonyl-[protein] + diphosphate. It catalyses the reaction L-tyrosyl-[protein] + ATP = O-(5'-adenylyl)-L-tyrosyl-[protein] + diphosphate. The catalysed reaction is L-histidyl-[protein] + UTP = N(tele)-(5'-uridylyl)-L-histidyl-[protein] + diphosphate. The enzyme catalyses L-seryl-[protein] + UTP = O-(5'-uridylyl)-L-seryl-[protein] + diphosphate. It carries out the reaction L-tyrosyl-[protein] + UTP = O-(5'-uridylyl)-L-tyrosyl-[protein] + diphosphate. In terms of biological role, nucleotidyltransferase involved in the post-translational modification of proteins. It can catalyze the addition of adenosine monophosphate (AMP) or uridine monophosphate (UMP) to a protein, resulting in modifications known as AMPylation and UMPylation. The chain is Protein nucleotidyltransferase YdiU from Bacillus cytotoxicus (strain DSM 22905 / CIP 110041 / 391-98 / NVH 391-98).